Reading from the N-terminus, the 238-residue chain is Tetrahydromethanopterin S-methyltransferase subunit A 1 (238 aa).

The Cytoplasmic segment spans residues 2 to 218 (VEKKSPAEGW…RMFAGMYSGK (217 aa)). His-84 is a binding site for 5-hydroxybenzimidazolylcob(I)amide. Residues 219-237 (VQGIMIGLAFTLTLGILLL) form a helical membrane-spanning segment. A topological domain (extracellular) is located at residue Val-238.

This sequence belongs to the MtrA family. The complex is composed of 8 subunits; MtrA, MtrB, MtrC, MtrD, MtrE, MtrF, MtrG and MtrH. It depends on 5-hydroxybenzimidazolylcob(I)amide as a cofactor.

It is found in the cell membrane. It carries out the reaction 5-methyl-5,6,7,8-tetrahydromethanopterin + coenzyme M + 2 Na(+)(in) = 5,6,7,8-tetrahydromethanopterin + methyl-coenzyme M + 2 Na(+)(out). The protein operates within one-carbon metabolism; methanogenesis from CO(2); methyl-coenzyme M from 5,10-methylene-5,6,7,8-tetrahydromethanopterin: step 2/2. In terms of biological role, part of a complex that catalyzes the formation of methyl-coenzyme M and tetrahydromethanopterin from coenzyme M and methyl-tetrahydromethanopterin. This is an energy-conserving, sodium-ion translocating step. The chain is Tetrahydromethanopterin S-methyltransferase subunit A 1 from Methanothermobacter thermautotrophicus (strain ATCC 29096 / DSM 1053 / JCM 10044 / NBRC 100330 / Delta H) (Methanobacterium thermoautotrophicum).